A 459-amino-acid chain; its full sequence is Cyclooctatin synthase (459 aa).

Cys-408 is a binding site for heme.

The protein belongs to the cytochrome P450 family. The cofactor is heme.

The catalysed reaction is cyclooctat-9-ene-5,7-diol + AH2 + O2 = cyclooctatin + A + H2O. Functionally, involved in the biosynthesis of cyclooctatin, a potent inhibitor of lysophospholipase. Catalyzes the hydroxylation of cyclooctat-9-ene-5,7-diol at C-18 to yield the final product, cyclooctatin. This is Cyclooctatin synthase from Streptomyces melanosporofaciens.